We begin with the raw amino-acid sequence, 198 residues long: Transcription factor LBX2 (198 aa).

Disordered stretches follow at residues 24–46 (MVPRAPSAPQLPESGPGPTSPLC), 63–89 (ALQPSEGRAGPDALGPGPFGRKRRKSR), and 173–198 (DPGLCLGPAGPDSRPHLSDEEIQVDD). Positions 85 to 144 (RRKSRTAFTAQQVLELERRFVFQKYLAPSERDGLATRLGLANAQVVTWFQNRRAKLKRDV) form a DNA-binding region, homeobox.

It is found in the nucleus. Its function is as follows. Transcription factor. The protein is Transcription factor LBX2 (LBX2) of Homo sapiens (Human).